Reading from the N-terminus, the 364-residue chain is DNA replication and repair protein RecF (364 aa).

An ATP-binding site is contributed by 30 to 37 (GDNGAGKT).

This sequence belongs to the RecF family.

It is found in the cytoplasm. Its function is as follows. The RecF protein is involved in DNA metabolism; it is required for DNA replication and normal SOS inducibility. RecF binds preferentially to single-stranded, linear DNA. It also seems to bind ATP. The polypeptide is DNA replication and repair protein RecF (Stenotrophomonas maltophilia (strain R551-3)).